Consider the following 104-residue polypeptide: L-rhamnose mutarotase (104 aa).

A substrate-binding site is contributed by Tyr-18. Residue His-22 is the Proton donor of the active site. Substrate-binding positions include Tyr-41 and 76–77; that span reads WW.

This sequence belongs to the rhamnose mutarotase family. In terms of assembly, homodimer.

Its subcellular location is the cytoplasm. The enzyme catalyses alpha-L-rhamnose = beta-L-rhamnose. The protein operates within carbohydrate metabolism; L-rhamnose metabolism. Its function is as follows. Involved in the anomeric conversion of L-rhamnose. The polypeptide is L-rhamnose mutarotase (Salmonella heidelberg (strain SL476)).